Reading from the N-terminus, the 85-residue chain is Phosphocarrier protein HPr (85 aa).

One can recognise an HPr domain in the interval 1–85; that stretch reads MFQQEVTITA…HLVKLMAELE (85 aa). Catalysis depends on His-15, which acts as the Pros-phosphohistidine intermediate.

The protein belongs to the HPr family.

The protein resides in the cytoplasm. Its function is as follows. General (non sugar-specific) component of the phosphoenolpyruvate-dependent sugar phosphotransferase system (sugar PTS). This major carbohydrate active-transport system catalyzes the phosphorylation of incoming sugar substrates concomitantly with their translocation across the cell membrane. The phosphoryl group from phosphoenolpyruvate (PEP) is transferred to the phosphoryl carrier protein HPr by enzyme I. Phospho-HPr then transfers it to the PTS EIIA domain. In Escherichia coli O157:H7, this protein is Phosphocarrier protein HPr (ptsH).